A 369-amino-acid polypeptide reads, in one-letter code: Probable dual-specificity RNA methyltransferase RlmN (369 aa).

The active-site Proton acceptor is the E106. Positions 118–354 (EARRLTVCVS…VTVRRSRGQD (237 aa)) constitute a Radical SAM core domain. An intrachain disulfide couples C125 to C359. Positions 132, 136, and 139 each coordinate [4Fe-4S] cluster. S-adenosyl-L-methionine contacts are provided by residues 183 to 184 (GE), S215, 238 to 240 (SLH), and N316. The S-methylcysteine intermediate role is filled by C359.

Belongs to the radical SAM superfamily. RlmN family. The cofactor is [4Fe-4S] cluster.

The protein resides in the cytoplasm. It catalyses the reaction adenosine(2503) in 23S rRNA + 2 reduced [2Fe-2S]-[ferredoxin] + 2 S-adenosyl-L-methionine = 2-methyladenosine(2503) in 23S rRNA + 5'-deoxyadenosine + L-methionine + 2 oxidized [2Fe-2S]-[ferredoxin] + S-adenosyl-L-homocysteine. The enzyme catalyses adenosine(37) in tRNA + 2 reduced [2Fe-2S]-[ferredoxin] + 2 S-adenosyl-L-methionine = 2-methyladenosine(37) in tRNA + 5'-deoxyadenosine + L-methionine + 2 oxidized [2Fe-2S]-[ferredoxin] + S-adenosyl-L-homocysteine. In terms of biological role, specifically methylates position 2 of adenine 2503 in 23S rRNA and position 2 of adenine 37 in tRNAs. The protein is Probable dual-specificity RNA methyltransferase RlmN of Salinibacter ruber (strain DSM 13855 / M31).